Here is a 223-residue protein sequence, read N- to C-terminus: Pyridoxine/pyridoxamine 5'-phosphate oxidase (223 aa).

Substrate is bound by residues 8-11 (RVDY) and Lys-65. FMN-binding positions include 60 to 65 (RTVLLK), 75 to 76 (YT), Arg-81, Lys-82, and Gln-104. Residues Tyr-122, Arg-126, and Ser-130 each coordinate substrate. FMN contacts are provided by residues 139 to 140 (QS) and Trp-188. 194 to 196 (RLH) lines the substrate pocket. Residue Arg-198 coordinates FMN.

It belongs to the pyridoxamine 5'-phosphate oxidase family. In terms of assembly, homodimer. FMN serves as cofactor.

It carries out the reaction pyridoxamine 5'-phosphate + O2 + H2O = pyridoxal 5'-phosphate + H2O2 + NH4(+). It catalyses the reaction pyridoxine 5'-phosphate + O2 = pyridoxal 5'-phosphate + H2O2. The protein operates within cofactor metabolism; pyridoxal 5'-phosphate salvage; pyridoxal 5'-phosphate from pyridoxamine 5'-phosphate: step 1/1. It functions in the pathway cofactor metabolism; pyridoxal 5'-phosphate salvage; pyridoxal 5'-phosphate from pyridoxine 5'-phosphate: step 1/1. Functionally, catalyzes the oxidation of either pyridoxine 5'-phosphate (PNP) or pyridoxamine 5'-phosphate (PMP) into pyridoxal 5'-phosphate (PLP). This Kineococcus radiotolerans (strain ATCC BAA-149 / DSM 14245 / SRS30216) protein is Pyridoxine/pyridoxamine 5'-phosphate oxidase.